Consider the following 872-residue polypeptide: Rho guanine nucleotide exchange factor scd1 (872 aa).

The tract at residues 1 to 29 is disordered; sequence MAYFQDRKTSSRSLPSYINHSTQNLVGPR. Polar residues predominate over residues 11 to 25; sequence SRSLPSYINHSTQNL. Residues 82 to 198 enclose the Calponin-homology (CH) domain; that stretch reads DSIHREALNS…TIELLLKKYE (117 aa). The 175-residue stretch at 228 to 402 folds into the DH domain; it reads SGRRVTAELY…VRVANQVNET (175 aa). Residues 426–547 enclose the PH domain; it reads SLQYFGQLLV…WMSVLNRLLW (122 aa). Disordered stretches follow at residues 553–667 and 743–765; these read SPKD…STAS and MKSD…STST. Residues 560–584 show a composition bias toward polar residues; the sequence is AASTPANPVYNRSSSQTSKGYNSSD. The residue at position 583 (serine 583) is a Phosphoserine. Residues 599–616 are compositionally biased toward low complexity; sequence SPTSISSPSSKSSPFTKT. Basic and acidic residues predominate over residues 617-633; that stretch reads TSKDTKSATTTDERPSD. Low complexity-rich tracts occupy residues 645 to 667 and 748 to 765; these read TSSL…STAS and SLLP…STST. A PB1 domain is found at 772-859; that stretch reads TTNVKIRLRL…FELMDPVHNK (88 aa).

In terms of assembly, scd1, scd2, cdc42, and ras1, in its GTP-bound state, act cooperatively to form a protein complex. Interacts with moe1 and cdc42.

The protein localises to the nucleus. Its subcellular location is the cytoplasm. Required for mating and morphogenesis. May contain a cryptic binding site for cdc42 that is enhanced by binding Ras. Interacts directly with scd2. Promotes the exchange of cdc42-bound GDP by GTP. Involved in septation and stimulates the elongation of conjugation tubes. The sequence is that of Rho guanine nucleotide exchange factor scd1 (scd1) from Schizosaccharomyces pombe (strain 972 / ATCC 24843) (Fission yeast).